The sequence spans 249 residues: 2,3-bisphosphoglycerate-dependent phosphoglycerate mutase (249 aa).

Substrate-binding positions include Arg9–Asn16, Thr22–Gly23, Arg61, Glu88–Tyr91, Lys99, Arg115–Arg116, and Gly184–Asn185. His10 serves as the catalytic Tele-phosphohistidine intermediate. Glu88 serves as the catalytic Proton donor/acceptor.

It belongs to the phosphoglycerate mutase family. BPG-dependent PGAM subfamily. As to quaternary structure, homodimer.

The enzyme catalyses (2R)-2-phosphoglycerate = (2R)-3-phosphoglycerate. Its pathway is carbohydrate degradation; glycolysis; pyruvate from D-glyceraldehyde 3-phosphate: step 3/5. Catalyzes the interconversion of 2-phosphoglycerate and 3-phosphoglycerate. The chain is 2,3-bisphosphoglycerate-dependent phosphoglycerate mutase from Xylella fastidiosa (strain 9a5c).